Reading from the N-terminus, the 246-residue chain is MAGHSKWANIQHRKGRQDAVRAKLFSKLSKEITVAAKMGDPDPDKNPRLRLAVKEAKSQSMPKDNIDRAIKKSQAGDGDEYEEIRYEGYGPNGVAVIVEAMTDNRNRTASTVRSTFTKNGGNLGETGSVGFMFDRKGTVTYPADVGDADTVLMAAIEAGAEDVESSEDGHVIWCADTDLNEVATALEAELGESEQTKLVWRPTTTTELDLEGMQKLMRLIEALEDDDDVQRVTANFEASDEVMEQL.

Belongs to the TACO1 family.

It localises to the cytoplasm. The chain is Probable transcriptional regulatory protein RD1_2018 from Roseobacter denitrificans (strain ATCC 33942 / OCh 114) (Erythrobacter sp. (strain OCh 114)).